The chain runs to 335 residues: Capsular polysaccharide phosphotransferase WcwK (335 aa).

Belongs to the stealth family.

In Streptococcus pneumoniae, this protein is Capsular polysaccharide phosphotransferase WcwK (wcwK).